The following is a 163-amino-acid chain: Large ribosomal subunit protein uL10 (163 aa).

Belongs to the universal ribosomal protein uL10 family. In terms of assembly, part of the ribosomal stalk of the 50S ribosomal subunit. The N-terminus interacts with L11 and the large rRNA to form the base of the stalk. The C-terminus forms an elongated spine to which L12 dimers bind in a sequential fashion forming a multimeric L10(L12)X complex.

In terms of biological role, forms part of the ribosomal stalk, playing a central role in the interaction of the ribosome with GTP-bound translation factors. The protein is Large ribosomal subunit protein uL10 of Haemophilus influenzae (strain PittGG).